Here is a 126-residue protein sequence, read N- to C-terminus: UPF0102 protein BH12350 (126 aa).

Belongs to the UPF0102 family.

The polypeptide is UPF0102 protein BH12350 (Bartonella henselae (strain ATCC 49882 / DSM 28221 / CCUG 30454 / Houston 1) (Rochalimaea henselae)).